The sequence spans 938 residues: TFIIH basal transcription factor complex helicase/translocase XPB subunit (938 aa).

The Helicase ATP-binding domain maps to 394–562; the sequence is FRSGNKAHQG…DLRHLVGPKL (169 aa). An ATP-binding site is contributed by 407 to 414; sequence LPCGAGKT. Positions 515-518 match the DEVH box motif; it reads DEVH. One can recognise a Helicase C-terminal domain in the interval 627–781; the sequence is WCTQALLEFH…SYRVLQSDMV (155 aa).

Belongs to the helicase family. RAD25/XPB subfamily. In terms of assembly, component of the 7-subunit TFIIH core complex composed of XPB, XPD, SSL1, TFB1, TFB2, TFB4 and TFB5.

It catalyses the reaction Couples ATP hydrolysis with the unwinding of duplex DNA by translocating in the 3'-5' direction.. The enzyme catalyses ATP + H2O = ADP + phosphate + H(+). Its function is as follows. ATP-dependent 3'-5' DNA helicase/translocase; binds dsDNA rather than ssDNA, unzipping it in a translocase rather than classical helicase activity. Component of the general transcription factor IIH (TFIIH) core complex, involved in spliced leader RNA (SL RNA) gene transcription by RNA polymerase II. TFIIH has an essential role in transcription initiation. When the pre-initiation complex (PIC) has been established, TFIIH is required for promoter opening and promoter escape. The ATPase activity of XPB is required for promoter opening and promoter escape. The protein is TFIIH basal transcription factor complex helicase/translocase XPB subunit of Trypanosoma brucei brucei (strain 927/4 GUTat10.1).